We begin with the raw amino-acid sequence, 317 residues long: Ribonuclease Z (317 aa).

The Zn(2+) site is built by histidine 62, histidine 64, aspartate 66, histidine 67, histidine 139, aspartate 210, and histidine 268. Aspartate 66 (proton acceptor) is an active-site residue.

The protein belongs to the RNase Z family. In terms of assembly, homodimer. The cofactor is Zn(2+).

It carries out the reaction Endonucleolytic cleavage of RNA, removing extra 3' nucleotides from tRNA precursor, generating 3' termini of tRNAs. A 3'-hydroxy group is left at the tRNA terminus and a 5'-phosphoryl group is left at the trailer molecule.. In terms of biological role, zinc phosphodiesterase, which displays some tRNA 3'-processing endonuclease activity. Probably involved in tRNA maturation, by removing a 3'-trailer from precursor tRNA. The chain is Ribonuclease Z from Picosynechococcus sp. (strain ATCC 27264 / PCC 7002 / PR-6) (Agmenellum quadruplicatum).